A 1671-amino-acid polypeptide reads, in one-letter code: Kinesin-like protein unc-104 (1671 aa).

In terms of domain architecture, Kinesin motor spans 3–351; it reads SVKVAVRVRP…LRYADRAKQI (349 aa). Residue 97–104 participates in ATP binding; it reads GQTGAGKS. Positions 358-437 form a coiled coil; sequence NEDANAKLIR…IAELNETWEE (80 aa). The tract at residues 391-413 is disordered; that stretch reads DELNKSTTGIKSPSKSRNRNGST. Polar residues predominate over residues 395 to 413; the sequence is KSTTGIKSPSKSRNRNGST. An FHA domain is found at 500 to 566; that stretch reads TRLGTHEANV…LKTGSRVILG (67 aa). The stretch at 577–674 forms a coiled coil; that stretch reads EQARELREKI…EEQSMTMSMY (98 aa). A disordered region spans residues 949–973; it reads DVDSGRGIDSNSASDCPENAEEPGE. In terms of domain architecture, PH spans 1538-1636; sequence VVARKGLLNV…WLYAINPLLA (99 aa).

It belongs to the TRAFAC class myosin-kinesin ATPase superfamily. Kinesin family. Unc-104 subfamily. As to quaternary structure, monomer.

Its subcellular location is the cytoplasm. The protein localises to the cytoskeleton. Required for presynaptic maturation, has a role in axonal transport of dense-core vesicles carrying synaptic vesicle precursors, components required for the morphological transformation of axonal growth cones to mature boutons. The chain is Kinesin-like protein unc-104 from Drosophila pseudoobscura pseudoobscura (Fruit fly).